The primary structure comprises 307 residues: Pantothenate kinase (307 aa).

G90–S97 is a binding site for ATP.

It belongs to the prokaryotic pantothenate kinase family.

Its subcellular location is the cytoplasm. It catalyses the reaction (R)-pantothenate + ATP = (R)-4'-phosphopantothenate + ADP + H(+). It functions in the pathway cofactor biosynthesis; coenzyme A biosynthesis; CoA from (R)-pantothenate: step 1/5. The polypeptide is Pantothenate kinase (Levilactobacillus brevis (strain ATCC 367 / BCRC 12310 / CIP 105137 / JCM 1170 / LMG 11437 / NCIMB 947 / NCTC 947) (Lactobacillus brevis)).